The sequence spans 534 residues: Glucomannan 4-beta-mannosyltransferase 2 (534 aa).

A helical membrane pass occupies residues 36–56 (VIVPLLQLAVYICLLMSVMLL). The active site involves Asp-136. Asp-195 and Asp-197 together coordinate substrate. Asp-289 is an active-site residue. The next 4 helical transmembrane spans lie at 368–388 (IIAH…TILV), 404–426 (IITI…WILF), 483–503 (LNTL…YDFV), and 509–529 (YFIY…GWIG).

Belongs to the glycosyltransferase 2 family. Plant cellulose synthase-like A subfamily.

The protein localises to the golgi apparatus membrane. It catalyses the reaction GDP-mannose + (glucomannan)n = GDP + (glucomannan)n+1.. Functionally, possesses glucomannan synthase and mannan synthase activities in vitro. Mannan synthase consists of a 4-beta-mannosyltransferase activity on mannan using GDP-mannose. The beta-1,4-mannan product is the backbone for galactomannan synthesis by galactomannan galactosyltransferase. Galactomannan is a noncellulosic polysaccharides of plant cell wall. This Arabidopsis thaliana (Mouse-ear cress) protein is Glucomannan 4-beta-mannosyltransferase 2.